The following is a 490-amino-acid chain: Betaine aldehyde dehydrogenase (490 aa).

Threonine 26, isoleucine 27, and aspartate 93 together coordinate K(+). Residue 150–152 (GAW) coordinates NAD(+). The active-site Charge relay system is the lysine 162. Residue 176-179 (KPSE) coordinates NAD(+). Residue valine 180 participates in K(+) binding. Residue 230–233 (GVAS) coordinates NAD(+). Leucine 246 contacts K(+). Glutamate 252 (proton acceptor) is an active-site residue. Positions 254, 286, and 387 each coordinate NAD(+). The active-site Nucleophile is cysteine 286. Residue cysteine 286 is modified to Cysteine sulfenic acid (-SOH). Positions 457 and 460 each coordinate K(+). Glutamate 464 serves as the catalytic Charge relay system.

This sequence belongs to the aldehyde dehydrogenase family. As to quaternary structure, dimer of dimers. K(+) serves as cofactor.

It carries out the reaction betaine aldehyde + NAD(+) + H2O = glycine betaine + NADH + 2 H(+). The protein operates within amine and polyamine biosynthesis; betaine biosynthesis via choline pathway; betaine from betaine aldehyde: step 1/1. Its function is as follows. Involved in the biosynthesis of the osmoprotectant glycine betaine. Catalyzes the irreversible oxidation of betaine aldehyde to the corresponding acid. The sequence is that of Betaine aldehyde dehydrogenase from Escherichia coli O6:K15:H31 (strain 536 / UPEC).